The chain runs to 84 residues: Large ribosomal subunit protein bL27 (84 aa).

Residues methionine 1–lysine 25 form a disordered region.

The protein belongs to the bacterial ribosomal protein bL27 family.

This chain is Large ribosomal subunit protein bL27, found in Sulfurovum sp. (strain NBC37-1).